Reading from the N-terminus, the 457-residue chain is Tubulin alpha chain (457 aa).

GTP contacts are provided by Q12, E77, S146, G150, T151, T186, N213, and N235. Position 77 (E77) interacts with Mg(2+).

The protein belongs to the tubulin family. Dimer of alpha and beta chains. A typical microtubule is a hollow water-filled tube with an outer diameter of 25 nm and an inner diameter of 15 nM. Alpha-beta heterodimers associate head-to-tail to form protofilaments running lengthwise along the microtubule wall with the beta-tubulin subunit facing the microtubule plus end conferring a structural polarity. Microtubules usually have 13 protofilaments but different protofilament numbers can be found in some organisms and specialized cells. Mg(2+) is required as a cofactor. Post-translationally, undergoes a tyrosination/detyrosination cycle, the cyclic removal and re-addition of a C-terminal tyrosine residue by the enzymes tubulin tyrosine carboxypeptidase (TTCP) and tubulin tyrosine ligase (TTL), respectively.

It is found in the cytoplasm. Its subcellular location is the cytoskeleton. It carries out the reaction GTP + H2O = GDP + phosphate + H(+). In terms of biological role, tubulin is the major constituent of microtubules, a cylinder consisting of laterally associated linear protofilaments composed of alpha- and beta-tubulin heterodimers. Microtubules grow by the addition of GTP-tubulin dimers to the microtubule end, where a stabilizing cap forms. Below the cap, tubulin dimers are in GDP-bound state, owing to GTPase activity of alpha-tubulin. The chain is Tubulin alpha chain (tubA) from Dictyostelium discoideum (Social amoeba).